Here is a 604-residue protein sequence, read N- to C-terminus: Sulfite reductase [NADPH] flavoprotein alpha-component (604 aa).

A Flavodoxin-like domain is found at 66 to 204 (VTVLSASQTG…AADGWTGRIV (139 aa)). Residues 72–77 (SQTGNA), 119–122 (STQG), and 155–164 (LGDSSYPNFC) each bind FMN. The tract at residues 212–231 (AKNRATPAPQTTPPAGLQTA) is disordered. Residues 216–231 (ATPAPQTTPPAGLQTA) show a composition bias toward low complexity. An FAD-binding FR-type domain is found at 239–453 (ADPFPAALLA…VERNDGFRLP (215 aa)). FAD-binding positions include T327, Q361, 391-394 (RLYS), 409-411 (TVG), and 424-427 (GGAS). NADP(+) contacts are provided by residues 524–525 (SR), 530–534 (KIYVQ), and D566. Y604 contributes to the FAD binding site.

This sequence belongs to the NADPH-dependent sulphite reductase flavoprotein subunit CysJ family. In the N-terminal section; belongs to the flavodoxin family. It in the C-terminal section; belongs to the flavoprotein pyridine nucleotide cytochrome reductase family. In terms of assembly, alpha(8)-beta(8). The alpha component is a flavoprotein, the beta component is a hemoprotein. Requires FAD as cofactor. The cofactor is FMN.

It catalyses the reaction hydrogen sulfide + 3 NADP(+) + 3 H2O = sulfite + 3 NADPH + 4 H(+). It functions in the pathway sulfur metabolism; hydrogen sulfide biosynthesis; hydrogen sulfide from sulfite (NADPH route): step 1/1. Its function is as follows. Component of the sulfite reductase complex that catalyzes the 6-electron reduction of sulfite to sulfide. This is one of several activities required for the biosynthesis of L-cysteine from sulfate. The flavoprotein component catalyzes the electron flow from NADPH -&gt; FAD -&gt; FMN to the hemoprotein component. The sequence is that of Sulfite reductase [NADPH] flavoprotein alpha-component from Neisseria meningitidis serogroup C / serotype 2a (strain ATCC 700532 / DSM 15464 / FAM18).